The following is a 218-amino-acid chain: LexA repressor (218 aa).

Positions Arg-28 to Arg-48 form a DNA-binding region, H-T-H motif. Residues Ser-136 and Lys-173 each act as for autocatalytic cleavage activity in the active site.

This sequence belongs to the peptidase S24 family. Homodimer.

It carries out the reaction Hydrolysis of Ala-|-Gly bond in repressor LexA.. Represses a number of genes involved in the response to DNA damage (SOS response), including recA and lexA. In the presence of single-stranded DNA, RecA interacts with LexA causing an autocatalytic cleavage which disrupts the DNA-binding part of LexA, leading to derepression of the SOS regulon and eventually DNA repair. This Cupriavidus pinatubonensis (strain JMP 134 / LMG 1197) (Cupriavidus necator (strain JMP 134)) protein is LexA repressor.